The chain runs to 351 residues: L-threonine 3-dehydrogenase (351 aa).

Cys-39 provides a ligand contact to Zn(2+). Active-site charge relay system residues include Thr-41 and His-44. Zn(2+)-binding residues include His-64, Glu-65, Cys-94, Cys-97, Cys-100, and Cys-108. NAD(+) is bound by residues Ile-176, Asp-196, Arg-201, 271–273 (LGI), and 295–296 (IY).

The protein belongs to the zinc-containing alcohol dehydrogenase family. Homotetramer. It depends on Zn(2+) as a cofactor.

It is found in the cytoplasm. The enzyme catalyses L-threonine + NAD(+) = (2S)-2-amino-3-oxobutanoate + NADH + H(+). It participates in amino-acid degradation; L-threonine degradation via oxydo-reductase pathway; glycine from L-threonine: step 1/2. Catalyzes the NAD(+)-dependent oxidation of L-threonine to 2-amino-3-ketobutyrate. This Francisella philomiragia subsp. philomiragia (strain ATCC 25017 / CCUG 19701 / FSC 153 / O#319-036) protein is L-threonine 3-dehydrogenase.